The chain runs to 1119 residues: Ubiquitin-associated protein 2 (1119 aa).

The disordered stretch occupies residues 1-26 (MMTSVSSDHCRGAREKPQISAAQSTQ). The segment covering 8-17 (DHCRGAREKP) has biased composition (basic and acidic residues). Residues 48–92 (KNDSDFEAKVKQLMEVTGKNQDECIVALHDCNGDVNKAINILLEG) enclose the UBA domain. A coiled-coil region spans residues 105-130 (KKKNFAKENSENKENREKKSEKESSR). Over residues 110–130 (AKENSENKENREKKSEKESSR) the composition is skewed to basic and acidic residues. Disordered regions lie at residues 110 to 202 (AKEN…YSDS), 385 to 476 (LGQF…SPST), 622 to 736 (VHNR…SSHQ), 853 to 905 (RDGS…VNPA), 937 to 966 (SAKQHGVNLSTPTPPFQQASGYGQHGYSTG), 982 to 1020 (GGYAGSSQAPNKSAGSGPGKGVSVSSSTTGLPDMTGSVY), and 1082 to 1119 (HLPQDAQSGSGQRSQPSSLQPKSQASKPAYGNSPYWTN). Position 166 is an omega-N-methylarginine (R166). Over residues 168–182 (KRARGRGFGRGRGRG) the composition is skewed to basic residues. Residues 389–407 (TTTPSTQQNSTSHPTTTTS) show a composition bias toward low complexity. Phosphoserine is present on residues S432, S439, S473, and S630. Residues 435–447 (LSQLSQRQQHQSQ) are compositionally biased toward low complexity. Polar residues predominate over residues 651 to 662 (SQQTLDTPKTTG). Positions 663–678 (PPSALPSVSSLPSTTS) are enriched in low complexity. A compositionally biased stretch (polar residues) spans 679-694 (CTALLPSTSQHTGDLT). Low complexity-rich tracts occupy residues 695 to 736 (SSPL…SSHQ) and 874 to 900 (SASPAPATTPAQPQQSQSQTHHTAQQP). The segment covering 943 to 957 (VNLSTPTPPFQQASG) has biased composition (polar residues). Composition is skewed to low complexity over residues 1002 to 1011 (GVSVSSSTTG) and 1088 to 1102 (QSGSGQRSQPSSLQP).

In terms of assembly, may interact with ANXA2.

Its subcellular location is the nucleus. It is found in the chromosome. The protein resides in the cytoplasm. Its function is as follows. Recruits the ubiquitination machinery to RNA polymerase II for polyubiquitination, removal and degradation, when the transcription-coupled nucleotide excision repair (TC-NER) machinery fails to resolve DNA damage. May promote the degradation of ANXA2. This Homo sapiens (Human) protein is Ubiquitin-associated protein 2.